The chain runs to 619 residues: Grainyhead-like protein 2 homolog (619 aa).

The transcription activation stretch occupies residues 1-90 (MSQETDNKRL…KINEGHEDQD (90 aa)). 3 disordered regions span residues 86 to 108 (HEDQ…STGE), 125 to 147 (NDTV…PQPA), and 423 to 444 (EERK…CNNS). The segment covering 99-108 (ETPSNLSTGE) has biased composition (polar residues). One can recognise a Grh/CP2 DB domain in the interval 239–477 (ASSTFQYTLE…DLDVQPVLFI (239 aa)).

This sequence belongs to the grh/CP2 family. Grainyhead subfamily.

The protein localises to the nucleus. Its subcellular location is the membrane. Transcription factor playing an important role in primary neurulation and in epithelial development. Binds directly to the consensus DNA sequence 5'-AACCGGTT-3' acting as an activator and repressor on distinct target genes. The chain is Grainyhead-like protein 2 homolog (grhl2) from Xenopus tropicalis (Western clawed frog).